Consider the following 181-residue polypeptide: Caltractin ICL1a (181 aa).

The segment at 1–29 is disordered; the sequence is MARRGQQPPPQQAPPAQKNQPGKFNPAEF. A compositionally biased stretch (low complexity) spans 14–23; it reads PPAQKNQPGK. EF-hand domains are found at residues 37 to 72, 73 to 108, 110 to 145, and 146 to 181; these read EEVLEIKEAFDLFDTDGTQSIDPKELKAAMTSLGFE, AKNQTIYQMISDLDTDGSGQIDFAEFLKLMTARISE, DSKADIQKVFNLFDSERAGVVTLKDLRKVAKELGET, and MDDSELQEMIDRADSDGDAQVTFEDFYNIMTKKTFA. Aspartate 50, aspartate 52, threonine 54, serine 56, glutamate 61, aspartate 86, aspartate 88, serine 90, glutamine 92, and glutamate 97 together coordinate Ca(2+).

Belongs to the centrin family. In terms of assembly, monomer.

It is found in the cytoplasm. Its subcellular location is the cytoskeleton. Its function is as follows. Plays a fundamental role in microtubule organizing center structure and function. Component of the infraciliary lattice (ICL) and the ciliary basal bodies. In Paramecium tetraurelia, this protein is Caltractin ICL1a (Icl1a).